Here is a 405-residue protein sequence, read N- to C-terminus: Phosphopentomutase (405 aa).

The Mn(2+) site is built by D10, D305, H310, D346, H347, and H358.

The protein belongs to the phosphopentomutase family. Mn(2+) is required as a cofactor.

It is found in the cytoplasm. The catalysed reaction is 2-deoxy-alpha-D-ribose 1-phosphate = 2-deoxy-D-ribose 5-phosphate. The enzyme catalyses alpha-D-ribose 1-phosphate = D-ribose 5-phosphate. It participates in carbohydrate degradation; 2-deoxy-D-ribose 1-phosphate degradation; D-glyceraldehyde 3-phosphate and acetaldehyde from 2-deoxy-alpha-D-ribose 1-phosphate: step 1/2. Functionally, isomerase that catalyzes the conversion of deoxy-ribose 1-phosphate (dRib-1-P) and ribose 1-phosphate (Rib-1-P) to deoxy-ribose 5-phosphate (dRib-5-P) and ribose 5-phosphate (Rib-5-P), respectively. The polypeptide is Phosphopentomutase (Methylobacterium sp. (strain 4-46)).